The chain runs to 233 residues: Small heat shock protein hspF (233 aa).

In terms of domain architecture, sHSP spans 129–233; that stretch reads IPLFTFFEPL…ILLITVNKFL (105 aa).

It belongs to the small heat shock protein (HSP20) family.

The sequence is that of Small heat shock protein hspF (hspF-1) from Dictyostelium discoideum (Social amoeba).